Here is a 107-residue protein sequence, read N- to C-terminus: YcgL domain-containing protein Pcryo_0807 (107 aa).

One can recognise a YcgL domain in the interval 1-95 (MHCDIYKFLK…QDVMRRQAEL (95 aa)).

The sequence is that of YcgL domain-containing protein Pcryo_0807 from Psychrobacter cryohalolentis (strain ATCC BAA-1226 / DSM 17306 / VKM B-2378 / K5).